The following is a 766-amino-acid chain: Pyrophosphate-energized vacuolar membrane proton pump (766 aa).

The Intravacuolar portion of the chain corresponds to 2–8; it reads GAAILPD. The helical transmembrane segment at 9–35 threads the bilayer; it reads LGTEILIPVCAVIGIAFALFQWLLVSK. Residues 36-84 lie on the Cytoplasmic side of the membrane; that stretch reads VKLSAVRDASPNAAAKNGYNDYLIEEEEGINDHNVVVKCAEIQNAISEG. A helical transmembrane segment spans residues 85–114; it reads ATSFLFTEYKYVGIFMVAFAILIFLFLGSV. Topologically, residues 115 to 135 are intravacuolar; sequence EGFSTSPQACSYDKTKTCKPA. Residues Cys124 and Cys132 are joined by a disulfide bond. Residues 136-163 form a helical membrane-spanning segment; that stretch reads LATAIFSTVSFLLGGVTSLVSGFLGMKI. Topologically, residues 164-186 are cytoplasmic; sequence ATYANARTTLEARKGVGKAFITA. The chain crosses the membrane as a helical span at residues 187–216; the sequence is FRSGAVMGFLLAANGLLVLYIAINLFKIYY. Topologically, residues 217-219 are intravacuolar; sequence GDD. The helical transmembrane segment at 220–248 threads the bilayer; it reads WGGLFEAITGYGLGGSSMALFGRVGGGIY. Topologically, residues 249–286 are cytoplasmic; the sequence is TKAADVGADLVGKVERNIPEDDPRNPAVIADNVGDNVG. Lys250 is a binding site for substrate. The Mg(2+) site is built by Asp253, Asp257, and Asp283. A helical transmembrane segment spans residues 287-312; that stretch reads DIAGMGSDLFGSYAESSCAALVVASI. The Intravacuolar portion of the chain corresponds to 313 to 320; that stretch reads SSFGLNHE. The chain crosses the membrane as a helical span at residues 321 to 346; that stretch reads LTAMLYPLIVSSVGILVCLLTTLFAT. Over 347–354 the chain is Cytoplasmic; the sequence is DFFEIKAV. A helical membrane pass occupies residues 355–382; sequence KEIEPALKKQLVISTVLMTIGVAVVSFV. The Intravacuolar segment spans residues 383–401; sequence ALPTSFTIFNFGVQKDVKS. A helical membrane pass occupies residues 402–425; that stretch reads WQLFLCVAVGLWAGLIIGFVTEYY. At 426–447 the chain is on the cytoplasmic side; the sequence is TSNAYSPVQDVADSCRTGAATN. The chain crosses the membrane as a helical span at residues 448 to 472; the sequence is VIFGLALGYKSVIIPIFAIAISIFV. At 473-478 the chain is on the intravacuolar side; sequence SFTFAA. The helical transmembrane segment at 479–505 threads the bilayer; that stretch reads MYGIAVAALGMLSTIATGLAIDAYGPI. Residues 506-534 are Cytoplasmic-facing; it reads SDNAGGIAEMAGMSHRIRERTDALDAAGN. Mg(2+)-binding residues include Asp507 and Asn534. Residues 535-563 traverse the membrane as a helical segment; that stretch reads TTAAIGKGFAIGSAALVSLALFGAFVSRA. Residues 564–573 are Intravacuolar-facing; sequence SITTVDVLTP. Residues 574-602 traverse the membrane as a helical segment; that stretch reads KVFIGLIVGAMLPYWFSAMTMKSVGSAAL. Residues 603 to 631 are Cytoplasmic-facing; it reads KMVEEVRRQFNTIPGLMEGTAKPDYATCV. Residues 632–660 form a helical membrane-spanning segment; the sequence is KISTDASIKEMIPPGALVMLTPLVVGILF. A topological domain (intravacuolar) is located at residue Gly661. A helical transmembrane segment spans residues 662–689; that stretch reads VETLSGVLAGSLVSGVQIAISASNTGGA. Topologically, residues 690-732 are cytoplasmic; sequence WDNAKKYIEAGASEHARSLGPKGSDCHKAAVIGDTIGDPLKDT. Mg(2+) contacts are provided by Asp691 and Asp727. Lys730 contributes to the substrate binding site. A helical transmembrane segment spans residues 733–758; that stretch reads SGPSLNILIKLMAVESLVFAPFFATH. Over 759–765 the chain is Intravacuolar; the sequence is GGLLFKI.

Belongs to the H(+)-translocating pyrophosphatase (TC 3.A.10) family. K(+)-stimulated subfamily. In terms of assembly, homodimer.

The protein resides in the vacuole membrane. It catalyses the reaction diphosphate + H2O + H(+)(in) = 2 phosphate + 2 H(+)(out). With respect to regulation, inhibited by excess pyrophosphate as well as excess Mg(2+). Inhibition by ATP, GTP, and CTP is reversed by increasing the Mg(2+) concentration. This suggests that the substrate is a particular metal complex such as MgPPi(2-). Modification of Asp-283 with DCCD abolishes pyrophosphatase activity. Proton-translocating inorganic pyrophosphatase that contributes to the transtonoplast (from cytosol to vacuole lumen) H(+)-electrochemical potential difference. It establishes a proton gradient of similar and often greater magnitude than the H(+)-ATPase on the same membrane. This chain is Pyrophosphate-energized vacuolar membrane proton pump, found in Vigna radiata var. radiata (Mung bean).